A 238-amino-acid chain; its full sequence is Fibroblast growth factor-binding protein 1 (238 aa).

Residues 1 to 20 (MRIHGLILLSFLLLAAQVLS) form the signal peptide. The interval 25 to 61 (KTAKNVPDSTTEEDMSPSLGKARNKQRSRTSKSMTHG) is disordered. 3 cysteine pairs are disulfide-bonded: cysteine 71–cysteine 88, cysteine 97–cysteine 130, and cysteine 106–cysteine 142. A glycan (O-linked (GalNAc...) serine) is linked at serine 164. The sufficient for interaction with FGF2 and FGF2-induced effects stretch occupies residues 197–238 (KDSECLEDPDVLTQRKTALEFCGESWSSFCTFFLNMLQATSC). 2 disulfide bridges follow: cysteine 201/cysteine 238 and cysteine 218/cysteine 226.

It belongs to the fibroblast growth factor-binding protein family. As to quaternary structure, found in a complex with FGFBP1, FGF1 and FGF2. Interacts with FGF1, FGF2, FGF7, FGF10, FGF22 and HSPG2. Expressed in gut, eye, thymus, skin, lung, tongue, Purkinje cells and cerebral chorioid plexus (at protein level).

The protein resides in the secreted. It localises to the extracellular space. The protein localises to the cell membrane. Its function is as follows. Acts as a carrier protein that release fibroblast-binding factors (FGFs) from the extracellular matrix (EM) storage and thus enhance the mitogenic activity of FGFs. Enhances FGF2 signaling during tissue repair, angiogenesis and in tumor growth. The polypeptide is Fibroblast growth factor-binding protein 1 (Fgfbp1) (Rattus norvegicus (Rat)).